Reading from the N-terminus, the 379-residue chain is Cytoplasmic tRNA 2-thiolation protein 1 (379 aa).

The protein belongs to the TtcA family. CTU1/NCS6/ATPBD3 subfamily.

The protein localises to the cytoplasm. Its pathway is tRNA modification; 5-methoxycarbonylmethyl-2-thiouridine-tRNA biosynthesis. Functionally, plays a central role in 2-thiolation of mcm(5)S(2)U at tRNA wobble positions of tRNA(Lys), tRNA(Glu) and tRNA(Gln). Directly binds tRNAs and probably acts by catalyzing adenylation of tRNAs, an intermediate required for 2-thiolation. It is unclear whether it acts as a sulfurtransferase that transfers sulfur from thiocarboxylated URM1 onto the uridine of tRNAs at wobble position. Prior mcm(5) tRNA modification by the elongator complex is required for 2-thiolation. May also be involved in protein urmylation. This chain is Cytoplasmic tRNA 2-thiolation protein 1, found in Lodderomyces elongisporus (strain ATCC 11503 / CBS 2605 / JCM 1781 / NBRC 1676 / NRRL YB-4239) (Yeast).